Consider the following 102-residue polypeptide: MTTTSSKVAIKPLEDRIVVQPLDAEQTTASGLVIPDTAKEKPQEGVVLAVGPGRFEDGNRLPLDVSVGDVVLYSKYGGTEVKYNGEEYLVLSARDVLAIVEK.

Belongs to the GroES chaperonin family. As to quaternary structure, heptamer of 7 subunits arranged in a ring. Interacts with the chaperonin GroEL.

The protein localises to the cytoplasm. In terms of biological role, together with the chaperonin GroEL, plays an essential role in assisting protein folding. The GroEL-GroES system forms a nano-cage that allows encapsulation of the non-native substrate proteins and provides a physical environment optimized to promote and accelerate protein folding. GroES binds to the apical surface of the GroEL ring, thereby capping the opening of the GroEL channel. The sequence is that of Co-chaperonin GroES from Streptomyces coelicolor (strain ATCC BAA-471 / A3(2) / M145).